Here is a 467-residue protein sequence, read N- to C-terminus: Uronate isomerase (467 aa).

This sequence belongs to the metallo-dependent hydrolases superfamily. Uronate isomerase family.

It catalyses the reaction D-glucuronate = D-fructuronate. The enzyme catalyses aldehydo-D-galacturonate = keto-D-tagaturonate. It participates in carbohydrate metabolism; pentose and glucuronate interconversion. The polypeptide is Uronate isomerase (Streptococcus uberis (strain ATCC BAA-854 / 0140J)).